The following is a 57-amino-acid chain: Potassium channel toxin alpha-KTx 8.2 (57 aa).

Positions 1-28 are cleaved as a signal peptide; it reads MSRLYAIILIALVFNVVMTITPDMKVEA. Intrachain disulfides connect C31–C47, C34–C52, and C38–C54.

This sequence belongs to the short scorpion toxin superfamily. Potassium channel inhibitor family. Alpha-KTx 08 subfamily. As to expression, expressed by the venom gland.

It localises to the secreted. Functionally, this toxin inhibits rKv1.1/KCNA1 (100% inhibition at 3 uM), Kv1.3/KCNA3 (human, mouse and rat) (IC(50)=269-467 nM), shaker IR (60% at 3 uM) and activates the mouse capsaicin receptor TRPV1 (EC(50)=132 uM, at 20 degrees Celsius), a non-selective cation channel expressed by sensory neurons of the pain pathway. In vivo, intraplantar injection of this toxin in WT mice hind paw shows significant acute pain, whereas no pain is observed when the toxin is injected into TRPV1 KO mice. In addition, subcutaneous injection into mice (185 mg) produces an excitation of the animal, but no lethality, whereas injection into cockroaches does not provoke lethality as well. The chain is Potassium channel toxin alpha-KTx 8.2 from Olivierus martensii (Manchurian scorpion).